We begin with the raw amino-acid sequence, 102 residues long: MIPGEIIPAAGLPLDANTGLETKVLTVANTGDRPIQVGSHYHFFETNEALEFDRDATRGFRLNIPAGTAVRFEAGDTKRVELVALAGAREVYGLNARVNGKL.

It belongs to the urease beta subunit family. As to quaternary structure, heterotrimer of UreA (gamma), UreB (beta) and UreC (alpha) subunits. Three heterotrimers associate to form the active enzyme.

Its subcellular location is the cytoplasm. The enzyme catalyses urea + 2 H2O + H(+) = hydrogencarbonate + 2 NH4(+). It participates in nitrogen metabolism; urea degradation; CO(2) and NH(3) from urea (urease route): step 1/1. The chain is Urease subunit beta from Opitutus terrae (strain DSM 11246 / JCM 15787 / PB90-1).